The following is a 253-amino-acid chain: Uridylate kinase (253 aa).

9–12 is an ATP binding site; that stretch reads KLSG. Gly51 serves as a coordination point for UMP. The ATP site is built by Gly52 and Arg56. Residues Asp72 and 133–140 each bind UMP; that span reads SGNPFFTT. Positions 160, 166, and 169 each coordinate ATP.

It belongs to the UMP kinase family. Homohexamer.

The protein localises to the cytoplasm. It carries out the reaction UMP + ATP = UDP + ADP. It participates in pyrimidine metabolism; CTP biosynthesis via de novo pathway; UDP from UMP (UMPK route): step 1/1. Its activity is regulated as follows. Inhibited by UTP. In terms of biological role, catalyzes the reversible phosphorylation of UMP to UDP. In Synechococcus sp. (strain JA-2-3B'a(2-13)) (Cyanobacteria bacterium Yellowstone B-Prime), this protein is Uridylate kinase.